The chain runs to 455 residues: MAHWPEDVGIIGIEMIFPSLYVDQAELETYDEVSPGKYTMGLGQDKMGVCTDREDINSLCLTAVDKLMERNNIDYNDIGWLEVGTETILDKVKSVKTVLMQLFEESGNTDVEGIDTINACYRGTAALFNALIWIESSSWDGRYAIVVAADIAIYAKECSPTGGAGALLMLIGANAPIVIDRGVRASHMKHAYDFYKPDLMSEYPVVDGKLSVQCYLSALDHCYPRFCSKTEKYLKRCGKENTKIDLDYFDAFVFHSPYCKLVQKSVARLVLNDFIQYPEKYQDLQQLRNLKFEDTYFDRDIEKIFMDKSKQLFEKKTKPSLMLANQVGNMYTTSLYGGLVSLLISEDIGELAGKCICMFSYGSGFAASMFSLHISTDSSPGSTLSRLVTNLTHIKPQVQQRVKLSPGEFENIMEIREQNHHKAPYTPVASPNTLFPGTWYLESIDSMHRRKYKRV.

Catalysis depends on E86, which acts as the Proton donor/acceptor. C120 acts as the Acyl-thioester intermediate in catalysis. Positions 120, 161, 211, 255, 264, 329, and 363 each coordinate (3S)-3-hydroxy-3-methylglutaryl-CoA. Catalysis depends on H255, which acts as the Proton donor/acceptor.

It belongs to the thiolase-like superfamily. HMG-CoA synthase family.

It carries out the reaction acetoacetyl-CoA + acetyl-CoA + H2O = (3S)-3-hydroxy-3-methylglutaryl-CoA + CoA + H(+). It participates in metabolic intermediate biosynthesis; (R)-mevalonate biosynthesis; (R)-mevalonate from acetyl-CoA: step 2/3. This enzyme condenses acetyl-CoA with acetoacetyl-CoA to form HMG-CoA, which is the substrate for HMG-CoA reductase. The polypeptide is Hydroxymethylglutaryl-CoA synthase 2 (HMGCS-2) (Blattella germanica (German cockroach)).